Here is a 217-residue protein sequence, read N- to C-terminus: Proteasome subunit beta (217 aa).

A propeptide spans 1-14 (MIANNDQYKEYMKG) (removed in mature form; by autocatalysis). Threonine 15 acts as the Nucleophile in catalysis.

It belongs to the peptidase T1B family. As to quaternary structure, the 20S proteasome core is composed of 14 alpha and 14 beta subunits that assemble into four stacked heptameric rings, resulting in a barrel-shaped structure. The two inner rings, each composed of seven catalytic beta subunits, are sandwiched by two outer rings, each composed of seven alpha subunits. The catalytic chamber with the active sites is on the inside of the barrel. Has a gated structure, the ends of the cylinder being occluded by the N-termini of the alpha-subunits. Is capped at one or both ends by the proteasome regulatory ATPase, PAN.

The protein resides in the cytoplasm. The enzyme catalyses Cleavage of peptide bonds with very broad specificity.. The formation of the proteasomal ATPase PAN-20S proteasome complex, via the docking of the C-termini of PAN into the intersubunit pockets in the alpha-rings, triggers opening of the gate for substrate entry. Interconversion between the open-gate and close-gate conformations leads to a dynamic regulation of the 20S proteasome proteolysis activity. Component of the proteasome core, a large protease complex with broad specificity involved in protein degradation. The sequence is that of Proteasome subunit beta from Methanococcus aeolicus (strain ATCC BAA-1280 / DSM 17508 / OCM 812 / Nankai-3).